We begin with the raw amino-acid sequence, 299 residues long: Acidic endochitinase Pun g 14, amyloplastic (299 aa).

The transit peptide at 1–26 (MAKTLPFSRALLLSLSILLVARAISA) directs the protein to the amyloplast. In terms of domain architecture, GH18 spans 27–299 (GDIAIYWGQN…TYSTTIKDQV (273 aa)). 2 cysteine pairs are disulfide-bonded: C46/C93 and C76/C83. E153 serves as the catalytic Proton donor. A disulfide bridge connects residues C185 and C216.

This sequence belongs to the glycosyl hydrolase 18 family. Chitinase class III subfamily. As to quaternary structure, monomer. As to expression, highly expressed in seeds and to a lesser extent in the skin of the pomegranate fruit (at protein level). Not expressed in leaves or flesh of the fruit (at protein level).

The protein resides in the plastid. The protein localises to the amyloplast. The catalysed reaction is Random endo-hydrolysis of N-acetyl-beta-D-glucosaminide (1-&gt;4)-beta-linkages in chitin and chitodextrins.. Its activity is regulated as follows. Activity is not affected by addition of 10 mM Ca(2+) or removal of Ca(2+). In terms of biological role, hydrolyzes chitin. Probable calcium storage protein of the seeds. Binds calcium ions with high capacity and low affinity. Involved in seed germination. In Punica granatum (Pomegranate), this protein is Acidic endochitinase Pun g 14, amyloplastic.